We begin with the raw amino-acid sequence, 198 residues long: MNIVLASSSPSRLSILRSAGVEPLVCPADVDEDALLDSLVGRSPADKVAALAQAKAEAIAGDYPDDVVIGGDSMLLLDGALQGKPHTVDKTIERWKQQRGKTAELITGHCVITPRGRHVETSTTTVTFAHADDADIEAYARTGEPLQCAGAFTLEAIGGWFIDSITGDPSSVIGLSLPVVRRALYAAGYNVSEFWNNN.

Asp-72 functions as the Proton acceptor in the catalytic mechanism.

The protein belongs to the Maf family. The cofactor is a divalent metal cation.

Its subcellular location is the cytoplasm. The catalysed reaction is a ribonucleoside 5'-triphosphate + H2O = a ribonucleoside 5'-phosphate + diphosphate + H(+). It carries out the reaction a 2'-deoxyribonucleoside 5'-triphosphate + H2O = a 2'-deoxyribonucleoside 5'-phosphate + diphosphate + H(+). In terms of biological role, nucleoside triphosphate pyrophosphatase. May have a dual role in cell division arrest and in preventing the incorporation of modified nucleotides into cellular nucleic acids. The sequence is that of Nucleoside triphosphate pyrophosphatase from Corynebacterium diphtheriae (strain ATCC 700971 / NCTC 13129 / Biotype gravis).